Reading from the N-terminus, the 188-residue chain is Putative manganese efflux pump MntP (188 aa).

6 helical membrane passes run 3–23 (ITAT…ASIG), 41–61 (LIFG…GMLA), 66–86 (LEWN…RMII), 107–129 (LLVT…LAFL), 143–163 (ATLI…PLLG), and 168–188 (ILGG…HFHG).

Belongs to the MntP (TC 9.B.29) family.

Its subcellular location is the cell inner membrane. Its function is as follows. Probably functions as a manganese efflux pump. In Citrobacter koseri (strain ATCC BAA-895 / CDC 4225-83 / SGSC4696), this protein is Putative manganese efflux pump MntP.